The primary structure comprises 556 residues: Beta-hexosaminidase subunit beta (556 aa).

The signal sequence occupies residues Met1–Ala42. Residues Ala43–Lys121 constitute a propeptide that is removed on maturation. Residue Asn84 is glycosylated (N-linked (GlcNAc...) asparagine). A disulfide bond links Cys91 and Cys137. N-linked (GlcNAc...) asparagine glycosylation is found at Asn142, Asn190, and Asn327. Intrachain disulfides connect Cys309–Cys360 and Cys534–Cys551. Residue Glu355 is the Proton donor of the active site.

The protein belongs to the glycosyl hydrolase 20 family. In terms of assembly, there are 3 forms of beta-hexosaminidase: hexosaminidase A is a heterodimer composed of one subunit alpha and one subunit beta (chain A and B); hexosaminidase B is a homodimer of two beta subunits (two chains A and B); hexosaminidase S is a homodimer of two alpha subunits. The composition of the dimer (isozyme A versus isozyme S) has a significant effect on the substrate specificity of the alpha subunit active site. Post-translationally, N-linked glycans at Asn-142 and Asn-190 consist of Man(3)-GlcNAc(2) and Man(5 to 7)-GlcNAc(2), respectively. The beta-A and beta-B chains are produced by proteolytic processing of the precursor beta chain.

The protein localises to the lysosome. Its subcellular location is the cytoplasmic vesicle. It localises to the secretory vesicle. The protein resides in the cortical granule. The catalysed reaction is Hydrolysis of terminal non-reducing N-acetyl-D-hexosamine residues in N-acetyl-beta-D-hexosaminides.. It catalyses the reaction N-acetyl-beta-D-galactosaminyl-(1-&gt;4)-beta-D-3-sulfogalactosyl-(1-&gt;4)-beta-D-glucosyl-(1&lt;-&gt;1')-ceramide + H2O = a beta-D-3-sulfogalactosyl-(1-&gt;4)-beta-D-glucosyl-(1&lt;-&gt;1')-ceramide + N-acetyl-beta-D-galactosamine. It carries out the reaction a ganglioside GM2 (d18:1(4E)) + H2O = a ganglioside GM3 (d18:1(4E)) + N-acetyl-beta-D-galactosamine. The enzyme catalyses a ganglioside GM2 + H2O = a ganglioside GM3 + N-acetyl-beta-D-galactosamine. The catalysed reaction is beta-D-GalNAc-(1-&gt;4)-alpha-L-IdoA-(1-&gt;3)-beta-D-GalNAc-4-sulfate-(1-&gt;4)-alpha-L-IdoA-(1-&gt;3)-D-GalNAc-4-sulfate + H2O = alpha-L-IdoA-(1-&gt;3)-beta-D-GalNAc-4-sulfate-(1-&gt;4)-alpha-L-IdoA-(1-&gt;3)-D-GalNAc-4-sulfate + N-acetyl-D-galactosamine. It catalyses the reaction N-acetyl-beta-D-6-sulfogalactosaminyl-(1-&gt;4)-alpha-L-iduronyl-(1-&gt;3)-N-acetyl-D-6-sulfogalactosamine + H2O = alpha-L-iduronyl-(1-&gt;3)-N-acetyl-D-6-sulfogalactosamine + N-acetyl-D-6-sulfogalactosamine. With respect to regulation, addition of GM2A stimulates the hydrolysis of sulfated glycosphingolipid SM2 and the ganglioside GM2. Functionally, hydrolyzes the non-reducing end N-acetyl-D-hexosamine and/or sulfated N-acetyl-D-hexosamine of glycoconjugates, such as the oligosaccharide moieties from proteins and neutral glycolipids, or from certain mucopolysaccharides. The isozyme B does not hydrolyze each of these substrates, however hydrolyzes efficiently neutral oligosaccharide. Only the isozyme A is responsible for the degradation of GM2 gangliosides in the presence of GM2A. During fertilization is responsible, at least in part, for the zona block to polyspermy. Present in the cortical granules of non-activated oocytes, is exocytosed during the cortical reaction in response to oocyte activation and inactivates the sperm galactosyltransferase-binding site, accounting for the block in sperm binding to the zona pellucida. In Homo sapiens (Human), this protein is Beta-hexosaminidase subunit beta.